A 433-amino-acid polypeptide reads, in one-letter code: Agnestins efflux protein AgnL12 (433 aa).

Polar residues-rich tracts occupy residues 1 to 10 and 25 to 40; these read MSRSTSTELQ and SIAS…PPST. The segment at 1-40 is disordered; that stretch reads MSRSTSTELQQELPASKEVPPDPTSIASSETASGSKPPST. 12 consecutive transmembrane segments (helical) span residues 47 to 67, 87 to 107, 116 to 136, 141 to 161, 174 to 194, 205 to 225, 248 to 268, 285 to 305, 309 to 329, 335 to 355, 370 to 390, and 401 to 421; these read ILVL…TNAF, ISWI…ISGY, LLIC…SLST, IFLT…LPAM, LAMG…PIAL, WTVR…CLAI, VMIF…SPFF, FYMV…PGLI, VGNY…ACCW, VGGI…VISL, GVAM…GTPI, and LGLS…ILLA.

This sequence belongs to the major facilitator superfamily. Monocarboxylate porter (TC 2.A.1.13) family.

It localises to the cell membrane. Functionally, efflux pump that may be involved in the secretion of agnestins, dihydroxy-xanthone metabolites. This Paecilomyces divaricatus (Penicillium divaricatum) protein is Agnestins efflux protein AgnL12.